Reading from the N-terminus, the 341-residue chain is Tryptophan--tRNA ligase (341 aa).

ATP is bound by residues 11 to 13 (RPT) and 19 to 20 (GH). The short motif at 12–20 (PTGKLHIGH) is the 'HIGH' region element. Residue Asp-140 participates in L-tryptophan binding. Residues 152–154 (GTD), Leu-194, and 202–206 (KMSKS) contribute to the ATP site. A 'KMSKS' region motif is present at residues 202-206 (KMSKS).

The protein belongs to the class-I aminoacyl-tRNA synthetase family. As to quaternary structure, homodimer.

It localises to the cytoplasm. It catalyses the reaction tRNA(Trp) + L-tryptophan + ATP = L-tryptophyl-tRNA(Trp) + AMP + diphosphate + H(+). Its function is as follows. Catalyzes the attachment of tryptophan to tRNA(Trp). The protein is Tryptophan--tRNA ligase of Streptococcus agalactiae serotype III (strain NEM316).